The following is a 615-amino-acid chain: Putative DNA ligase 205R (615 aa).

Lys-101 serves as the catalytic N6-AMP-lysine intermediate.

It belongs to the NAD-dependent DNA ligase family.

The catalysed reaction is NAD(+) + (deoxyribonucleotide)n-3'-hydroxyl + 5'-phospho-(deoxyribonucleotide)m = (deoxyribonucleotide)n+m + AMP + beta-nicotinamide D-nucleotide.. Its function is as follows. Catalyzes the formation of phosphodiester linkages between 5'-phosphoryl and 3'-hydroxyl groups in double-stranded DNA using NAD as a coenzyme and as the energy source for the reaction. The sequence is that of Putative DNA ligase 205R from Invertebrate iridescent virus 6 (IIV-6).